A 134-amino-acid chain; its full sequence is L-ectoine synthase (134 aa).

It belongs to the ectoine synthase family.

It carries out the reaction (2S)-4-acetamido-2-aminobutanoate = L-ectoine + H2O. Its pathway is amine and polyamine biosynthesis; ectoine biosynthesis; L-ectoine from L-aspartate 4-semialdehyde: step 3/3. In terms of biological role, catalyzes the circularization of gamma-N-acetyl-alpha,gamma-diaminobutyric acid (ADABA) to ectoine (1,4,5,6-tetrahydro-2-methyl-4-pyrimidine carboxylic acid), which is an excellent osmoprotectant. The protein is L-ectoine synthase of Shouchella clausii (strain KSM-K16) (Alkalihalobacillus clausii).